Here is a 201-residue protein sequence, read N- to C-terminus: MLTVVGMGPAGRHLMTPAALEAIDHADALAGGKRHLAQFPAFGGERFTLGADIGALLSWIAARRDKGIVVLASGDPLFYGIGTRLVAHFGIEQVRIIPGISAVQYLCAQAGIDMNDMWLTSSHGRCVSFEQLANHRKVAMVTDARCGPREIARELVARGKGHRLMVIGENLAMENERIHWLPVSAVNADYEMNAVVILDER.

It belongs to the precorrin methyltransferase family.

The catalysed reaction is Co-precorrin-7 + S-adenosyl-L-methionine = Co-precorrin-8X + S-adenosyl-L-homocysteine + H(+). Its pathway is cofactor biosynthesis; adenosylcobalamin biosynthesis; cob(II)yrinate a,c-diamide from sirohydrochlorin (anaerobic route): step 8/10. Its function is as follows. Catalyzes the methylation of C-5 in cobalt-precorrin-7 to form cobalt-precorrin-8. In Salmonella typhi, this protein is Cobalt-precorrin-7 C(5)-methyltransferase (cbiE).